The primary structure comprises 138 residues: uncharacterized protein (138 aa).

The chain crosses the membrane as a helical span at residues Ile11–Tyr33.

It localises to the membrane. This is an uncharacterized protein from Aquifex aeolicus (strain VF5).